The following is a 228-amino-acid chain: Woronin body membrane protein wscA (228 aa).

4 helical membrane passes run 89 to 109 (MTLY…GILQ), 130 to 150 (LIVS…IAGA), 162 to 182 (AGFM…LAFA), and 185 to 205 (FLPE…IGTY).

It belongs to the peroxisomal membrane protein PXMP2/4 family. As to quaternary structure, self-assembles into detergent-resistant oligomers and forms a complex with hexA assemblies.

It localises to the peroxisome membrane. The protein resides in the cell septum. In terms of biological role, woronin sorting complex protein involved in both Woronin bodies (WB) formation and inherence. Localizes to large peroxisome membranes where it self-assembles into detergent-resistant oligomers that envelop hex-1 assemblies, producing asymmetrical nascent WBs. These structures are then delivered to the cell cortex, which permits partitioning of the nascent WB and WB inheritance. The protein is Woronin body membrane protein wscA of Aspergillus fumigatus (strain ATCC MYA-4609 / CBS 101355 / FGSC A1100 / Af293) (Neosartorya fumigata).